The sequence spans 289 residues: Homoserine kinase (289 aa).

79-89 (PLARGLGSSSS) serves as a coordination point for ATP.

The protein belongs to the GHMP kinase family. Homoserine kinase subfamily.

Its subcellular location is the cytoplasm. It carries out the reaction L-homoserine + ATP = O-phospho-L-homoserine + ADP + H(+). It functions in the pathway amino-acid biosynthesis; L-threonine biosynthesis; L-threonine from L-aspartate: step 4/5. Its function is as follows. Catalyzes the ATP-dependent phosphorylation of L-homoserine to L-homoserine phosphate. The protein is Homoserine kinase of Streptococcus pneumoniae serotype 2 (strain D39 / NCTC 7466).